The primary structure comprises 41 residues: Maticotoxin A (41 aa).

2 cysteine pairs are disulfide-bonded: Cys3/Cys22 and Cys15/Cys39.

The protein belongs to the three-finger toxin family. Short-chain subfamily. In terms of tissue distribution, expressed by the venom gland.

It localises to the secreted. The polypeptide is Maticotoxin A (Calliophis bivirgatus (Blue Malaysian coral snake)).